A 185-amino-acid chain; its full sequence is Large ribosomal subunit protein uL5 (185 aa).

The protein belongs to the universal ribosomal protein uL5 family. In terms of assembly, part of the 50S ribosomal subunit; part of the 5S rRNA/L5/L18/L25 subcomplex. Contacts the 5S rRNA and the P site tRNA. Forms a bridge to the 30S subunit in the 70S ribosome.

In terms of biological role, this is one of the proteins that bind and probably mediate the attachment of the 5S RNA into the large ribosomal subunit, where it forms part of the central protuberance. In the 70S ribosome it contacts protein S13 of the 30S subunit (bridge B1b), connecting the 2 subunits; this bridge is implicated in subunit movement. Contacts the P site tRNA; the 5S rRNA and some of its associated proteins might help stabilize positioning of ribosome-bound tRNAs. The polypeptide is Large ribosomal subunit protein uL5 (Nitrobacter winogradskyi (strain ATCC 25391 / DSM 10237 / CIP 104748 / NCIMB 11846 / Nb-255)).